The sequence spans 1598 residues: Mushroom body large-type Kenyon cell-specific protein 1 (1598 aa).

Disordered regions lie at residues 83-105, 140-387, 436-462, and 495-525; these read PGNL…SLPA, RHHH…SDGI, PHDD…PMSV, and PLVG…SQDN. Residues 140 to 151 are compositionally biased toward basic residues; it reads RHHHLQNHHHHL. The span at 164 to 174 shows a compositional bias: low complexity; it reads QQQQQQQQRQQ. Positions 175–191 are enriched in basic and acidic residues; the sequence is QRQEERRLRPDEIKVEV. The span at 210–263 shows a compositional bias: low complexity; the sequence is STDASTPATVTTTGATTTLPAASATGTGPATPSAVVATSNATAAMTTGTTTIPT. The segment covering 275 to 291 has biased composition (acidic residues); it reads EGADDRDDDEENEEEED. 3 stretches are compositionally biased toward basic and acidic residues: residues 292-305, 315-324, and 335-346; these read GRGQ…LKLD, LRREKDRGSR, and DGTKERTEEVAL. Serine 444 carries the phosphoserine; by MAPK modification. The span at 445-461 shows a compositional bias: low complexity; sequence PQSDSSSSSRSAESPMS. One can recognise an HTH psq-type 1 domain in the interval 582-634; that stretch reads VGAGGGRRAYTEEELQAALRDIQSGKLGTRRAAVIYGIPRSTLRNKVYKLAME. Positions 610 to 630 form a DNA-binding region, H-T-H motif; sequence TRRAAVIYGIPRSTLRNKVYK. Disordered stretches follow at residues 636-705, 797-877, 962-1045, 1082-1145, 1248-1283, and 1301-1598; these read ERDA…SGAE, RLSK…DSAQ, GQTV…NYDR, ERHL…NGIK, ETSA…NGSF, and RAMT…SVEQ. The segment covering 653–687 has biased composition (low complexity); it reads APATTITTITTTTTTTTTTTTTTTTPNTTQNASAT. Acidic residues predominate over residues 694–705; it reads DEVDDKELSGAE. A compositionally biased stretch (low complexity) spans 820 to 855; sequence THPQAQAQAQPQQQQQQQQQQPQQQQQQQQQQQQQQ. Residues 965–975 are compositionally biased toward gly residues; that stretch reads VSGGGMGGCQP. The span at 1003-1021 shows a compositional bias: low complexity; sequence ANAQQGQAQAQAKPQSQEA. Residues 1034–1086 form the HTH psq-type 2 domain; it reads RPKRGKYRNYDRDSLVEAVRAVQRGEMSVHRAGSYYGVPHSTLEYKVKERHLM. Positions 1062-1082 form a DNA-binding region, H-T-H motif; it reads VHRAGSYYGVPHSTLEYKVKE. The segment covering 1093-1102 has biased composition (basic and acidic residues); that stretch reads QKQSDDKTKE. The segment covering 1103-1120 has biased composition (low complexity); that stretch reads TSTVTAAAAATNIRPGTA. Positions 1309-1318 are enriched in low complexity; it reads QQQQASSQQQ. Composition is skewed to basic and acidic residues over residues 1383–1392 and 1407–1442; these read DRGRNDDGSD and GSRD…DRKT. Residues 1447–1466 are compositionally biased toward low complexity; sequence PQQPQQQQQQQQQQQQQQQQ. A compositionally biased stretch (basic and acidic residues) spans 1481–1497; sequence TDKKSACDSKLIVDHSS. The segment covering 1501 to 1547 has biased composition (low complexity); that stretch reads QQQQPQQQQQQQQQQQPQQQSQQPQQQQPQPQQQQQQQQQQQPQQQQ. Residues 1562 to 1577 show a composition bias toward polar residues; sequence RGYNSGNNRSGEQANS.

As to quaternary structure, homodimer. As to expression, large-type Kenyon cells of mushroom body.

It localises to the nucleus. Transcriptional activator which binds to the consensus sequence 5'-CCCTATCGATCGATCTCTACCT-3'. May play a role in higher-order sensory processing. This is Mushroom body large-type Kenyon cell-specific protein 1 (Mblk-1) from Apis mellifera (Honeybee).